The sequence spans 279 residues: ATP synthase gamma chain (279 aa).

Belongs to the ATPase gamma chain family. As to quaternary structure, F-type ATPases have 2 components, CF(1) - the catalytic core - and CF(0) - the membrane proton channel. CF(1) has five subunits: alpha(3), beta(3), gamma(1), delta(1), epsilon(1). CF(0) has three main subunits: a, b and c.

It localises to the cell membrane. In terms of biological role, produces ATP from ADP in the presence of a proton gradient across the membrane. The gamma chain is believed to be important in regulating ATPase activity and the flow of protons through the CF(0) complex. This is ATP synthase gamma chain from Mycoplasma pneumoniae (strain ATCC 29342 / M129 / Subtype 1) (Mycoplasmoides pneumoniae).